The primary structure comprises 317 residues: 1-phosphofructokinase (317 aa).

Residues 223–228 and 254–255 each bind ATP; these read SMGAEG and GD. Residue Asp255 is the Proton acceptor of the active site.

This sequence belongs to the carbohydrate kinase PfkB family.

It catalyses the reaction beta-D-fructose 1-phosphate + ATP = beta-D-fructose 1,6-bisphosphate + ADP + H(+). Functionally, catalyzes the ATP-dependent phosphorylation of fructose-l-phosphate to fructose-l,6-bisphosphate. The chain is 1-phosphofructokinase from Vibrio cholerae serotype O1 (strain ATCC 39315 / El Tor Inaba N16961).